The sequence spans 169 residues: GTP-dependent dephospho-CoA kinase (169 aa).

GTP is bound by residues D45, D64, and E121.

This sequence belongs to the GTP-dependent DPCK family.

The enzyme catalyses 3'-dephospho-CoA + GTP = GDP + CoA + H(+). Its pathway is cofactor biosynthesis; coenzyme A biosynthesis. In terms of biological role, catalyzes the GTP-dependent phosphorylation of the 3'-hydroxyl group of dephosphocoenzyme A to form coenzyme A (CoA). The protein is GTP-dependent dephospho-CoA kinase of Methanobrevibacter smithii (strain ATCC 35061 / DSM 861 / OCM 144 / PS).